The following is a 600-amino-acid chain: MNCYKTHTCNELRKNDVEKEVTLSGWLYRKRDHGNLIFVDLRDFYGITQLVFNNDKDFFDEISNLKLESVITVTGIVEARTEDTVNSSISTGEIEVIVNNLRVESEVEFHFDEEIAKEERSILASITGEQEYPENMRFKYRFLDLRREKVRNNIILRSQIIAELRKLMIERGFLEIQTPILTASSPEGARDYLVPSRLNPGKFYALPQAPQIFKQLLMVSGFDKYFQIAPCFRDEDARADRSPGEFYQLDLEMSFVTQEDIFQIIESTLYRVFAKFSRKSVDKDFPRITYKEAMLKYGSDKPDLRNPLLISDVTEIFRDSGFNIFKSNIERGMVVRAIPAPKTAEEPRSFFDKKIEHAQKEFGAKGLGYITFDKDGTAKGPIAKFLDENRLNHIREATNIEPGDSVFFASDKENEAANIAGKVRTLLGSELSLIDDNIFKFCWIIDFPYFVYDDKSKKIDFFHNPFSMPHGGLKDLEDKNPLDILAYQYDLVCNGIELSSGAIRNNKLDIMYKAFAIAGYSRGEVDTRFGALVRAFRFGVPPHGGIAPGVDRIVMLLADEPNIREVICFPMNQQGEDVLMGAPSKVEDKHLRELSLKVIE.

An L-aspartate-binding site is contributed by E187. The interval 211 to 214 (QIFK) is aspartate. Positions 233 and 463 each coordinate L-aspartate. An ATP-binding site is contributed by 233 to 235 (RDE). E497 contacts ATP. R504 serves as a coordination point for L-aspartate. 549–552 (GVDR) is a binding site for ATP.

It belongs to the class-II aminoacyl-tRNA synthetase family. Type 1 subfamily. In terms of assembly, homodimer.

The protein resides in the cytoplasm. The catalysed reaction is tRNA(Asx) + L-aspartate + ATP = L-aspartyl-tRNA(Asx) + AMP + diphosphate. Aspartyl-tRNA synthetase with relaxed tRNA specificity since it is able to aspartylate not only its cognate tRNA(Asp) but also tRNA(Asn). Reaction proceeds in two steps: L-aspartate is first activated by ATP to form Asp-AMP and then transferred to the acceptor end of tRNA(Asp/Asn). This is Aspartate--tRNA(Asp/Asn) ligase from Wolbachia sp. subsp. Drosophila simulans (strain wRi).